Here is an 82-residue protein sequence, read N- to C-terminus: Small ribosomal subunit protein uS17 (82 aa).

It belongs to the universal ribosomal protein uS17 family. In terms of assembly, part of the 30S ribosomal subunit.

One of the primary rRNA binding proteins, it binds specifically to the 5'-end of 16S ribosomal RNA. This is Small ribosomal subunit protein uS17 from Shewanella sp. (strain MR-7).